The chain runs to 361 residues: S-adenosylmethionine:tRNA ribosyltransferase-isomerase (361 aa).

The protein belongs to the QueA family. In terms of assembly, monomer.

The protein localises to the cytoplasm. It carries out the reaction 7-aminomethyl-7-carbaguanosine(34) in tRNA + S-adenosyl-L-methionine = epoxyqueuosine(34) in tRNA + adenine + L-methionine + 2 H(+). It participates in tRNA modification; tRNA-queuosine biosynthesis. Functionally, transfers and isomerizes the ribose moiety from AdoMet to the 7-aminomethyl group of 7-deazaguanine (preQ1-tRNA) to give epoxyqueuosine (oQ-tRNA). The chain is S-adenosylmethionine:tRNA ribosyltransferase-isomerase from Actinobacillus pleuropneumoniae serotype 3 (strain JL03).